We begin with the raw amino-acid sequence, 514 residues long: Membrane-bound lytic murein transglycosylase F (514 aa).

Residues 1–30 (MKKLKINYLFIGILTLLLAAALWPSIPWFG) form the signal peptide. A non-LT domain region spans residues 31 to 269 (KTENHIAAIQ…RIEEKYLGHG (239 aa)). An LT domain region spans residues 270-514 (DDFDYVDTRS…LFTPQKKEEK (245 aa)). Glu314 is a catalytic residue.

It in the N-terminal section; belongs to the bacterial solute-binding protein 3 family. The protein in the C-terminal section; belongs to the transglycosylase Slt family.

It localises to the cell outer membrane. It carries out the reaction Exolytic cleavage of the (1-&gt;4)-beta-glycosidic linkage between N-acetylmuramic acid (MurNAc) and N-acetylglucosamine (GlcNAc) residues in peptidoglycan, from either the reducing or the non-reducing ends of the peptidoglycan chains, with concomitant formation of a 1,6-anhydrobond in the MurNAc residue.. In terms of biological role, murein-degrading enzyme that degrades murein glycan strands and insoluble, high-molecular weight murein sacculi, with the concomitant formation of a 1,6-anhydromuramoyl product. Lytic transglycosylases (LTs) play an integral role in the metabolism of the peptidoglycan (PG) sacculus. Their lytic action creates space within the PG sacculus to allow for its expansion as well as for the insertion of various structures such as secretion systems and flagella. This is Membrane-bound lytic murein transglycosylase F from Salmonella paratyphi A (strain ATCC 9150 / SARB42).